An 80-amino-acid polypeptide reads, in one-letter code: Cell division protein ZapB (80 aa).

The stretch at Phe3–Glu80 forms a coiled coil. Positions Ala41–Gln53 are enriched in basic and acidic residues. The tract at residues Ala41–Gln60 is disordered.

Belongs to the ZapB family. As to quaternary structure, homodimer. The ends of the coiled-coil dimer bind to each other, forming polymers. Interacts with FtsZ.

It is found in the cytoplasm. Functionally, non-essential, abundant cell division factor that is required for proper Z-ring formation. It is recruited early to the divisome by direct interaction with FtsZ, stimulating Z-ring assembly and thereby promoting cell division earlier in the cell cycle. Its recruitment to the Z-ring requires functional FtsA or ZipA. The protein is Cell division protein ZapB of Vibrio campbellii (strain ATCC BAA-1116).